Consider the following 293-residue polypeptide: HTH-type transcriptional regulator HdfR (293 aa).

Residues 1–58 (MDTELLKTFLEVSRTRHFGRAAESLYLTQSAVSFRIRQLENQLGANLFTRHRNNIRLT) form the HTH lysR-type domain. Residues 18 to 37 (FGRAAESLYLTQSAVSFRIR) constitute a DNA-binding region (H-T-H motif).

It belongs to the LysR transcriptional regulatory family.

Negatively regulates the transcription of the flagellar master operon flhDC by binding to the upstream region of the operon. The polypeptide is HTH-type transcriptional regulator HdfR (Yersinia enterocolitica serotype O:8 / biotype 1B (strain NCTC 13174 / 8081)).